Reading from the N-terminus, the 65-residue chain is Large ribosomal subunit protein bL35 (65 aa).

It belongs to the bacterial ribosomal protein bL35 family.

This Photorhabdus laumondii subsp. laumondii (strain DSM 15139 / CIP 105565 / TT01) (Photorhabdus luminescens subsp. laumondii) protein is Large ribosomal subunit protein bL35.